Here is a 347-residue protein sequence, read N- to C-terminus: Probable dual-specificity RNA methyltransferase RlmN (347 aa).

E94 (proton acceptor) is an active-site residue. The 235-residue stretch at 100–334 folds into the Radical SAM core domain; that stretch reads TETRTTACVS…AKVRHSRGKD (235 aa). C107 and C339 are joined by a disulfide. C114, C118, and C121 together coordinate [4Fe-4S] cluster. S-adenosyl-L-methionine-binding positions include 165–166, S197, 220–222, and N296; these read GE and SLH. The S-methylcysteine intermediate role is filled by C339.

Belongs to the radical SAM superfamily. RlmN family. It depends on [4Fe-4S] cluster as a cofactor.

It localises to the cytoplasm. It catalyses the reaction adenosine(2503) in 23S rRNA + 2 reduced [2Fe-2S]-[ferredoxin] + 2 S-adenosyl-L-methionine = 2-methyladenosine(2503) in 23S rRNA + 5'-deoxyadenosine + L-methionine + 2 oxidized [2Fe-2S]-[ferredoxin] + S-adenosyl-L-homocysteine. It carries out the reaction adenosine(37) in tRNA + 2 reduced [2Fe-2S]-[ferredoxin] + 2 S-adenosyl-L-methionine = 2-methyladenosine(37) in tRNA + 5'-deoxyadenosine + L-methionine + 2 oxidized [2Fe-2S]-[ferredoxin] + S-adenosyl-L-homocysteine. Specifically methylates position 2 of adenine 2503 in 23S rRNA and position 2 of adenine 37 in tRNAs. In Flavobacterium psychrophilum (strain ATCC 49511 / DSM 21280 / CIP 103535 / JIP02/86), this protein is Probable dual-specificity RNA methyltransferase RlmN.